Consider the following 480-residue polypeptide: ATP synthase subunit beta 1 (480 aa).

154–161 (GGAGVGKT) is a binding site for ATP.

The protein belongs to the ATPase alpha/beta chains family. F-type ATPases have 2 components, CF(1) - the catalytic core - and CF(0) - the membrane proton channel. CF(1) has five subunits: alpha(3), beta(3), gamma(1), delta(1), epsilon(1). CF(0) has four main subunits: a(1), b(1), b'(1) and c(9-12).

It localises to the cell inner membrane. It carries out the reaction ATP + H2O + 4 H(+)(in) = ADP + phosphate + 5 H(+)(out). Produces ATP from ADP in the presence of a proton gradient across the membrane. The catalytic sites are hosted primarily by the beta subunits. The sequence is that of ATP synthase subunit beta 1 from Bradyrhizobium sp. (strain BTAi1 / ATCC BAA-1182).